Consider the following 344-residue polypeptide: Exopolyphosphatase 1 (344 aa).

The interval 319–344 is disordered; it reads VHTSVRAVGGQPADRNAANRSRGSKP.

This sequence belongs to the GppA/Ppx family. Homodimer.

It carries out the reaction [phosphate](n) + H2O = [phosphate](n-1) + phosphate + H(+). Its function is as follows. Degradation of inorganic polyphosphates (polyP). Releases orthophosphate processively from the ends of the polyP chain. In Mycobacterium bovis (strain ATCC BAA-935 / AF2122/97), this protein is Exopolyphosphatase 1.